The chain runs to 561 residues: Putative transport protein Ent638_1362 (561 aa).

The next 5 membrane-spanning stretches (helical) occupy residues 8 to 28, 32 to 52, 66 to 86, 94 to 114, and 158 to 178; these read LLNG…LCLG, LGSV…LLGQ, FMLF…SIFF, MLAL…GKLF, and HLSL…IVAA. RCK C-terminal domains lie at 202–288 and 292–373; these read LDTD…SFRN and VFDR…RIGF. A run of 5 helical transmembrane segments spans residues 383 to 403, 406 to 426, 447 to 467, 475 to 495, and 540 to 560; these read LLAF…TFQF, FSFG…LGFL, FGLM…IGHS, MLVA…LFGA, and AIAN…WPGL.

This sequence belongs to the AAE transporter (TC 2.A.81) family. YbjL subfamily.

Its subcellular location is the cell membrane. This is Putative transport protein Ent638_1362 from Enterobacter sp. (strain 638).